A 679-amino-acid chain; its full sequence is Protein hook (679 aa).

The region spanning Asn6–Ala123 is the Calponin-homology (CH) domain. 2 coiled-coil regions span residues Glu135–Gly437 and Gln480–Leu574.

It belongs to the hook family. In terms of assembly, homodimer. Interacts with microtubules via its N-terminus.

It localises to the cytoplasm. The protein resides in the cytoskeleton. It is found in the endosome. Its subcellular location is the synapse. In terms of biological role, involved in endocytic trafficking by stabilizing organelles of the endocytic pathway. Probably acts as a cytoskeletal linker protein required to tether endosome vesicles to the cytoskeleton. Involved in modulation of endocytosis at stages required for down-regulation of membrane proteins that control synapse size. Not involved in synaptic vesicle recycling. Required in R7 cells for boss endocytosis into multivesicular bodies (MVBs). Has a role in regulating adult longevity. The sequence is that of Protein hook from Drosophila simulans (Fruit fly).